Consider the following 374-residue polypeptide: MTPTAQTTASARRVVFPFTAIVGQEEMKLALLLNVIDPKIGGVMIMGDRGTGKSTTIRALADLLPEIPVVANDPFNSDPSDPDLMSDEVRQKSGTGAEIPIEFKKVQMVDLPLGATEDRVCGTIDIEKALSEGVKAFEPGLLAKANRGILYVDEVNLLDDHLVDVLLDSAASGWNTVEREGISIRHPARFVLVGSGNPEEGELRPQLLDRFGMHAEIHTVKEPALRVQIVEQRSEFDQNPPTFLEKYNPEQTALQKKIVEAQKLLPEVKLDYDLRVKISEVCSELDVDGLRGDIVTNRAAKALTAYEGRTEVTVDDIRRVITLCLRHRLRKDPLESIDSGYKVEKVFARIFGVELLEDDSSQKNGAGQIKTGVR.

Position 47-54 (47-54 (GDRGTGKS)) interacts with ATP.

The protein belongs to the Mg-chelatase subunits D/I family.

It catalyses the reaction protoporphyrin IX + Mg(2+) + ATP + H2O = Mg-protoporphyrin IX + ADP + phosphate + 3 H(+). Its pathway is porphyrin-containing compound metabolism; chlorophyll biosynthesis. Involved in chlorophyll biosynthesis; introduces a magnesium ion into protoporphyrin IX to yield Mg-protoporphyrin IX. This chain is Magnesium-chelatase subunit ChlI (chlI), found in Nostoc sp. (strain PCC 7120 / SAG 25.82 / UTEX 2576).